The following is an 82-amino-acid chain: UPF0154 protein SMU_1719c (82 aa).

Residues 4 to 24 (FLWILLVIIALLAGLVGGTFI) traverse the membrane as a helical segment.

This sequence belongs to the UPF0154 family.

It is found in the membrane. The sequence is that of UPF0154 protein SMU_1719c from Streptococcus mutans serotype c (strain ATCC 700610 / UA159).